Consider the following 138-residue polypeptide: Large ribosomal subunit protein uL16 (138 aa).

It belongs to the universal ribosomal protein uL16 family. As to quaternary structure, part of the 50S ribosomal subunit.

Functionally, binds 23S rRNA and is also seen to make contacts with the A and possibly P site tRNAs. This is Large ribosomal subunit protein uL16 from Chlamydia trachomatis serovar D (strain ATCC VR-885 / DSM 19411 / UW-3/Cx).